The primary structure comprises 326 residues: Mitochondrial glycine transporter (326 aa).

3 Solcar repeats span residues 45–134 (HPVI…SKQY), 141–225 (PTAL…TRAT), and 237–321 (LMPL…MMAK). The next 6 helical transmembrane spans lie at 51 to 76 (FLCG…TRLQ), 109 to 135 (GMSP…KQYF), 147 to 172 (VILG…TRYE), 200 to 223 (GLTA…SQTR), 241 to 267 (VNFS…KTHM), and 296 to 314 (GSVP…AWTV).

This sequence belongs to the mitochondrial carrier (TC 2.A.29) family. SLC25A38 subfamily.

The protein localises to the mitochondrion inner membrane. It carries out the reaction glycine(in) = glycine(out). Its function is as follows. Mitochondrial glycine transporter that imports glycine into the mitochondrial matrix. Plays an important role in providing glycine for the first enzymatic step in heme biosynthesis, the condensation of glycine with succinyl-CoA to produce 5-aminolevulinate (ALA) in the mitochondrial matrix. Required during erythropoiesis. In terms of biological role, plays a role as pro-apoptotic protein that induces caspase-dependent apoptosis. The chain is Mitochondrial glycine transporter from Rattus norvegicus (Rat).